Here is a 767-residue protein sequence, read N- to C-terminus: Photosystem I P700 chlorophyll a apoprotein A1 (767 aa).

Positions methionine 1 to alanine 22 are disordered. Basic and acidic residues predominate over residues serine 8–alanine 22. The next 8 membrane-spanning stretches (helical) occupy residues isoleucine 76–alanine 99, leucine 162–histidine 185, leucine 201–alanine 225, isoleucine 309–tyrosine 327, arginine 368–tyrosine 391, leucine 407–valine 433, alanine 455–histidine 477, and leucine 558–leucine 576. [4Fe-4S] cluster is bound by residues cysteine 600 and cysteine 609. 2 helical membrane passes run histidine 616–tryptophan 637 and isoleucine 681–phenylalanine 703. Residue histidine 692 participates in divinylchlorophyll a' binding. Residues methionine 700 and tyrosine 708 each coordinate divinyl chlorophyll a. Tryptophan 709 contributes to the phylloquinone binding site. Residues alanine 741–alanine 761 traverse the membrane as a helical segment.

The protein belongs to the PsaA/PsaB family. The PsaA/B heterodimer binds the P700 divinyl chlorophyll special pair and subsequent electron acceptors. PSI consists of a core antenna complex that captures photons, and an electron transfer chain that converts photonic excitation into a charge separation. The cyanobacterial PSI reaction center is composed of one copy each of PsaA,B,C,D,E,F,I,J,K,L,M and X, and forms trimeric complexes. PSI electron transfer chain: 5 divinyl chlorophyll a, 1 divinyl chlorophyll a', 2 phylloquinones and 3 4Fe-4S clusters. PSI core antenna: 90 divinyl chlorophyll a, 22 carotenoids, 3 phospholipids and 1 galactolipid. P700 is a divinyl chlorophyll a/divinyl chlorophyll a' dimer, A0 is one or more divinyl chlorophyll a, A1 is one or both phylloquinones and FX is a shared 4Fe-4S iron-sulfur center. serves as cofactor.

Its subcellular location is the cellular thylakoid membrane. The enzyme catalyses reduced [plastocyanin] + hnu + oxidized [2Fe-2S]-[ferredoxin] = oxidized [plastocyanin] + reduced [2Fe-2S]-[ferredoxin]. PsaA and PsaB bind P700, the primary electron donor of photosystem I (PSI), as well as the electron acceptors A0, A1 and FX. PSI is a plastocyanin/cytochrome c6-ferredoxin oxidoreductase, converting photonic excitation into a charge separation, which transfers an electron from the donor P700 chlorophyll pair to the spectroscopically characterized acceptors A0, A1, FX, FA and FB in turn. Oxidized P700 is reduced on the lumenal side of the thylakoid membrane by plastocyanin or cytochrome c6. This is Photosystem I P700 chlorophyll a apoprotein A1 from Prochlorococcus marinus (strain MIT 9312).